The chain runs to 1729 residues: 1,3-beta-glucan synthase component bgs1 (1729 aa).

A Phosphoserine modification is found at Ser23. The next 6 membrane-spanning stretches (helical) occupy residues 378-398, 416-436, 448-468, 503-523, 546-566, and 577-597; these read WTAC…AVVF, SMLL…FIFA, LVVG…YSIT, FVSW…SYFF, YILG…LLYL, and YLWY…CLGI. Residues Ser784 and Ser788 each carry the phosphoserine modification. The next 8 membrane-spanning stretches (helical) occupy residues 1180–1200, 1237–1257, 1337–1357, 1440–1460, 1484–1504, 1515–1535, 1550–1572, and 1678–1698; these read MVIM…GAMY, ILSI…CELG, MLLF…WITL, YGEI…FLFI, VAPL…GIML, YGVY…VVVF, LLGF…ICFL, and ATLY…PFVF.

It belongs to the glycosyltransferase 48 family. In terms of assembly, component of the 1,3-beta-glucan synthase (GS) complex, composed of at least the alternate catalytic subunits bgs1, bgs2, bgs3, and bgs4, and a regulatory subunit chr4.

It is found in the cell membrane. It localises to the cell septum. The catalysed reaction is [(1-&gt;3)-beta-D-glucosyl](n) + UDP-alpha-D-glucose = [(1-&gt;3)-beta-D-glucosyl](n+1) + UDP + H(+). Functionally, alternate catalytic subunit of the 1,3-beta-glucan synthase (GS) complex. Synthesizes 1,3-beta-glucan, a major structural component of the fungal cell wall. Required for the assembly of the division septum and maintenance of cell polarity. The polypeptide is 1,3-beta-glucan synthase component bgs1 (bgs1) (Schizosaccharomyces pombe (strain 972 / ATCC 24843) (Fission yeast)).